Reading from the N-terminus, the 329-residue chain is MKLLRRAWRRRAALGLGTLALCGAALLYLARCAAEPGDPRAMSGRSPPPPAPARAAAFLAVLVASAPRAAERRSVIRSTWLARRGAPGDVWARFAVGTAGLGAEERRALEREQARHGDLLLLPALRDAYENLTAKVLAMLAWLDEHVAFEFVLKADDDSFARLDALLAELRAREPARRRRLYWGFFSGRGRVKPGGRWREAAWQLCDYYLPYALGGGYVLSADLVHYLRLSRDYLRAWHSEDVSLGAWLAPVDVQREHDPRFDTEYRSRGCSNQYLVTHKQSLEDMLEKHATLAREGRLCKREVQLRLSYVYDWSAPPSQCCQRREGIP.

Residues 1-11 (MKLLRRAWRRR) are Cytoplasmic-facing. Residues 12–34 (AALGLGTLALCGAALLYLARCAA) form a helical; Signal-anchor for type II membrane protein membrane-spanning segment. Residues 35–329 (EPGDPRAMSG…QCCQRREGIP (295 aa)) lie on the Lumenal side of the membrane. Residue N131 is glycosylated (N-linked (GlcNAc...) asparagine).

The protein belongs to the glycosyltransferase 31 family. Mn(2+) serves as cofactor. Ubiquitous.

The protein resides in the golgi apparatus. It localises to the golgi stack membrane. It carries out the reaction 3-O-(beta-D-galactosyl-(1-&gt;4)-beta-D-xylosyl)-L-seryl-[protein] + UDP-alpha-D-galactose = 3-O-(beta-D-galactosyl-(1-&gt;3)-beta-D-galactosyl-(1-&gt;4)-beta-D-xylosyl)-L-seryl-[protein] + UDP + H(+). It functions in the pathway glycan metabolism; chondroitin sulfate biosynthesis. Its pathway is glycan metabolism; heparan sulfate biosynthesis. In terms of biological role, beta-1,3-galactosyltransferase that transfers galactose from UDP-galactose to substrates with a terminal beta-linked galactose residue. Has a preference for galactose-beta-1,4-xylose that is found in the linker region of glycosaminoglycans, such as heparan sulfate and chondroitin sulfate. Has no activity towards substrates with terminal glucosamine or galactosamine residues. The chain is Beta-1,3-galactosyltransferase 6 (B3GALT6) from Homo sapiens (Human).